The chain runs to 202 residues: Large ribosomal subunit protein bL17 (202 aa).

Residues 130 to 142 (AAPAATAPAPVEE) show a composition bias toward low complexity. The tract at residues 130-202 (AAPAATAPAP…TEESTEDDKA (73 aa)) is disordered. 2 stretches are compositionally biased toward acidic residues: residues 143-168 (APAE…EASP) and 177-202 (QPVE…DDKA).

It belongs to the bacterial ribosomal protein bL17 family. Part of the 50S ribosomal subunit. Contacts protein L32.

The sequence is that of Large ribosomal subunit protein bL17 from Nocardioides sp. (strain ATCC BAA-499 / JS614).